A 110-amino-acid polypeptide reads, in one-letter code: MASFFLSSLVLFLAALILVPQGLAQYHLNPVYEPPVNGPPVNKPPQKETPVHKPPQKETPVHKPPQKEPPRHKPPQKEPPRHKPPHKKSHLHVTKPSYGKHPTEEHNIHF.

An N-terminal signal peptide occupies residues 1-24; it reads MASFFLSSLVLFLAALILVPQGLA. Positions 31–110 are disordered; sequence VYEPPVNGPP…HPTEEHNIHF (80 aa). Over residues 32-43 the composition is skewed to pro residues; sequence YEPPVNGPPVNK. Repeat copies occupy residues 34-38, 39-43, and 44-48. Residues 34 to 88 form an 11 X 5 AA approximate tandem repeats of P-P-[VQRH]-[NKH]-[GKE] region; the sequence is PPVNGPPVNKPPQKETPVHKPPQKETPVHKPPQKEPPRHKPPQKEPPRHKPPHKK. Basic and acidic residues predominate over residues 45–81; it reads PQKETPVHKPPQKETPVHKPPQKEPPRHKPPQKEPPR. The stretch at 49 to 53 is one 4; approximate repeat; sequence TPVHK. Repeat 5 spans residues 54-58; the sequence is PPQKE. One copy of the 6; approximate repeat lies at 59–63; it reads TPVHK. 5 tandem repeats follow at residues 64 to 68, 69 to 73, 74 to 78, 79 to 83, and 84 to 88. Residues 82–93 are compositionally biased toward basic residues; the sequence is HKPPHKKSHLHV. Positions 101–110 are enriched in basic and acidic residues; it reads HPTEEHNIHF.

The protein belongs to the plant proline-rich protein superfamily. ENOD12 family. In terms of tissue distribution, root nodules, stem and flower.

The protein resides in the secreted. It is found in the cell wall. Its function is as follows. Involved in the infection process during the plant-rhizobium interaction. This chain is Early nodulin-12A (ENOD12A), found in Pisum sativum (Garden pea).